Here is a 423-residue protein sequence, read N- to C-terminus: Phaseolin (423 aa).

Residues 1-21 (RRVPLLLLGILFLASLSASFA) form the signal peptide. A glycan (N-linked (GlcNAc...) asparagine) is linked at Asn-28. Cupin type-1 domains are found at residues 35–193 (FYFS…EKIN) and 228–383 (KSLD…EDVQ). 4 N-linked (GlcNAc...) asparagine glycosylation sites follow: Asn-243, Asn-332, Asn-390, and Asn-396. Residues 397–423 (GSYHKNAHPHEQEQQKQQKGRKGAFVY) form a disordered region. Residues 414–423 (QKGRKGAFVY) are compositionally biased toward basic residues.

Belongs to the 7S seed storage protein family. As to quaternary structure, homotrimer.

It localises to the vacuole. It is found in the aleurone grain. Its function is as follows. Major seed storage protein. The polypeptide is Phaseolin (PHS) (Phaseolus lunatus (Lima bean)).